The following is an 859-amino-acid chain: DNA mismatch repair protein MutS (859 aa).

617–624 (GPNMGGKS) lines the ATP pocket.

This sequence belongs to the DNA mismatch repair MutS family.

Functionally, this protein is involved in the repair of mismatches in DNA. It is possible that it carries out the mismatch recognition step. This protein has a weak ATPase activity. This is DNA mismatch repair protein MutS from Stutzerimonas stutzeri (strain A1501) (Pseudomonas stutzeri).